The sequence spans 123 residues: NADH-quinone oxidoreductase subunit A (123 aa).

A run of 3 helical transmembrane segments spans residues 11 to 31 (YLPI…IMIL), 68 to 88 (LVAI…PWAI), and 93 to 113 (IGKM…IGFI).

This sequence belongs to the complex I subunit 3 family. In terms of assembly, NDH-1 is composed of 14 different subunits. Subunits NuoA, H, J, K, L, M, N constitute the membrane sector of the complex.

The protein resides in the cell inner membrane. It catalyses the reaction a quinone + NADH + 5 H(+)(in) = a quinol + NAD(+) + 4 H(+)(out). Its function is as follows. NDH-1 shuttles electrons from NADH, via FMN and iron-sulfur (Fe-S) centers, to quinones in the respiratory chain. The immediate electron acceptor for the enzyme in this species is believed to be ubiquinone. Couples the redox reaction to proton translocation (for every two electrons transferred, four hydrogen ions are translocated across the cytoplasmic membrane), and thus conserves the redox energy in a proton gradient. The protein is NADH-quinone oxidoreductase subunit A of Rickettsia prowazekii (strain Madrid E).